The primary structure comprises 417 residues: Type II methyltransferase M.Eco47II (417 aa).

The SAM-dependent MTase C5-type domain occupies 81–414 (YTVLELFAGA…KSVVHLLDKI (334 aa)). C153 is a catalytic residue.

The protein belongs to the class I-like SAM-binding methyltransferase superfamily. C5-methyltransferase family.

The enzyme catalyses a 2'-deoxycytidine in DNA + S-adenosyl-L-methionine = a 5-methyl-2'-deoxycytidine in DNA + S-adenosyl-L-homocysteine + H(+). In terms of biological role, a methylase that recognizes the double-stranded sequence 5'-GGNCC-3', methylates C-? on both strands, and protects the DNA from cleavage by both the Eco47I and Eco47II endonucleases. The sequence is that of Type II methyltransferase M.Eco47II from Escherichia coli.